Consider the following 959-residue polypeptide: Ataxin-2 homolog (959 aa).

One can recognise a Sm domain in the interval 13 to 92 (DVLSAINDMI…IVDFAYVTQE (80 aa)). Disordered stretches follow at residues 203 to 378 (AREI…GSRV), 392 to 484 (TAPK…SVIT), 501 to 528 (PRVA…HPAM), 697 to 831 (PPQG…QHIQ), and 867 to 959 (PMQQ…QSPP). Residues 226-235 (DLDKITRQED) show a composition bias toward basic and acidic residues. Over residues 246 to 260 (NNSFNQQQQQRRNPN) the composition is skewed to low complexity. Over residues 270–281 (RRAEGLRGDRRN) the composition is skewed to basic and acidic residues. Low complexity predominate over residues 282 to 313 (SGSSSANNSRYGAPAAAQQNYSQNQQQQQGQK). 2 stretches are compositionally biased toward polar residues: residues 341–356 (RQQQ…NNNV) and 473–484 (VSVTSENDSVIT). Low complexity-rich tracts occupy residues 504–528 (APAT…HPAM), 697–707 (PPQGQQQQPRY), and 715–725 (QQQQQQPQQQQ). Composition is skewed to polar residues over residues 726–742 (FSGE…SQPT) and 756–765 (APQNGNMQAE). Low complexity predominate over residues 766-788 (SSSNASHSGSTSSQSGQRSGSPP). Positions 789–798 (GAVPPPPPPQ) are enriched in pro residues. Low complexity-rich tracts occupy residues 822-831 (MMQQQQQHIQ), 867-876 (PMQQNQHPQQ), and 902-911 (QQQQQQQQQQ). Polar residues predominate over residues 912 to 922 (MHRQNSLPQQF). Over residues 923-935 (QGNQGVNPSGQQS) the composition is skewed to low complexity. Residues 948-959 (TPRDQQHSQSPP) are compositionally biased toward polar residues.

Belongs to the ataxin-2 family. Interacts (via C-terminus) with szy-20 (via C-terminus); the interaction is RNA independent. Interacts with pab-1. Interacts with gdi-1. In terms of tissue distribution, expressed in the central nervous system, dorsal and ventral nerve cord, intestinal lining and body-wall muscle. Expressed in the gonad.

It is found in the cytoplasm. Its subcellular location is the nucleus. Probable RNA-binding protein that negatively regulates the translation of targets. Functions with RNA-binding protein szy-20 to ensure embryonic cell division, and to this end, plays a role in the regulation of centrosome assembly, position and size, and in astral microtubule outgrowth and nucleation. Required for gonad development, germ cell proliferation and for the production of oocytes. Regulates whole body growth and fat accumulation in response to food availability, and this may be through the mTOR pathway, upstream of daf-15 and rheb-1. The protein is Ataxin-2 homolog of Caenorhabditis elegans.